The sequence spans 315 residues: Cytochrome f (315 aa).

The signal sequence occupies residues 1–30; it reads MRTFLKFSTLVSKGVLVLVCSFFLTASSNA. Heme is bound by residues Tyr31, Cys51, Cys54, and His55. Residues 281 to 300 form a helical membrane-spanning segment; sequence IQGLLVFFLFVLLAQVFLVL.

It belongs to the cytochrome f family. As to quaternary structure, the 4 large subunits of the cytochrome b6-f complex are cytochrome b6, subunit IV (17 kDa polypeptide, petD), cytochrome f and the Rieske protein, while the 4 small subunits are PetG, PetL, PetM and PetN. The complex functions as a dimer. Heme is required as a cofactor.

The protein localises to the plastid. The protein resides in the chloroplast thylakoid membrane. Functionally, component of the cytochrome b6-f complex, which mediates electron transfer between photosystem II (PSII) and photosystem I (PSI), cyclic electron flow around PSI, and state transitions. This chain is Cytochrome f (petA), found in Chlorella vulgaris (Green alga).